Here is a 426-residue protein sequence, read N- to C-terminus: MKLQKPKGTQDILPGDSAKWQYVENVARETFKKYNYGEIRTPMFEHYEVISRSVGDTTDIVTKEMYDFHDKGDRHITLRPEGTAPVVRSYVENKLFAPEVQKPVKVYYIGSMFRYERPQAGRLREFHQLGVECFGSKNPATDVETIAMAYQLFNTLGIKDVTLHLNSLGNTDSRLAYRQALIDYLTPMRESLSKDSQRRLEENPLRVLDSKEKEDKVAVENAPSILDYLDEESQTHFDEVRAMLDSLNIPYVIDTNMVRGLDYYNHTIFEFITNIDKSELTICAGGRYDSLVEYFGGPETAGFGFGLGLERLLLVLDKQGIKLPVEESLDVYIAVLGSGANGKALELVQSIRYQGFKAERDYLGRKIKAQFKSADTFKAKTVITLGESEVESGVVKVKNNATREEVTVSFEELTTNFATVLKQLEK.

Belongs to the class-II aminoacyl-tRNA synthetase family. In terms of assembly, homodimer.

The protein localises to the cytoplasm. It carries out the reaction tRNA(His) + L-histidine + ATP = L-histidyl-tRNA(His) + AMP + diphosphate + H(+). The sequence is that of Histidine--tRNA ligase from Streptococcus thermophilus (strain CNRZ 1066).